The primary structure comprises 112 residues: Cytochrome c 2.1 (112 aa).

C20, C23, H24, and M85 together coordinate heme c.

Belongs to the cytochrome c family. In terms of processing, binds 1 heme c group covalently per subunit.

The protein resides in the mitochondrion intermembrane space. Its function is as follows. Electron carrier protein. The oxidized form of the cytochrome c heme group can accept an electron from the heme group of the cytochrome c1 subunit of cytochrome reductase. Cytochrome c then transfers this electron to the cytochrome oxidase complex, the final protein carrier in the mitochondrial electron-transport chain. The protein is Cytochrome c 2.1 of Caenorhabditis briggsae.